The sequence spans 290 residues: tRNA pseudouridine synthase A (290 aa).

Catalysis depends on Asp-56, which acts as the Nucleophile. Tyr-109 serves as a coordination point for substrate.

It belongs to the tRNA pseudouridine synthase TruA family.

It catalyses the reaction uridine(38/39/40) in tRNA = pseudouridine(38/39/40) in tRNA. Formation of pseudouridine at positions 38, 39 and 40 in the anticodon stem and loop of transfer RNAs. The sequence is that of tRNA pseudouridine synthase A from Methanobrevibacter smithii (strain ATCC 35061 / DSM 861 / OCM 144 / PS).